Reading from the N-terminus, the 193-residue chain is dCTP deaminase, dUMP-forming (193 aa).

Residues 101-106 (KSSLGR), aspartate 119, 127-129 (TLE), glutamine 148, tyrosine 162, and glutamine 174 contribute to the dCTP site. Glutamate 129 (proton donor/acceptor) is an active-site residue.

Belongs to the dCTP deaminase family. Homotrimer.

It carries out the reaction dCTP + 2 H2O = dUMP + NH4(+) + diphosphate. Its pathway is pyrimidine metabolism; dUMP biosynthesis; dUMP from dCTP: step 1/1. Bifunctional enzyme that catalyzes both the deamination of dCTP to dUTP and the hydrolysis of dUTP to dUMP without releasing the toxic dUTP intermediate. This chain is dCTP deaminase, dUMP-forming, found in Bifidobacterium adolescentis (strain ATCC 15703 / DSM 20083 / NCTC 11814 / E194a).